A 227-amino-acid chain; its full sequence is Lectin (227 aa).

Residues 1-28 (MTMTSTTTKAMAMAAAVLAAAAVAATNA) form the signal peptide. Position 29 is a pyrrolidone carboxylic acid (Gln29). Chitin-binding type-1 domains lie at 29-70 (QTCG…ACCS), 71-113 (SQRC…PCRA), 114-156 (DIKC…ACCP), and 157-199 (EKRC…GCYK). Disulfide bonds link Cys31-Cys46, Cys40-Cys52, Cys45-Cys59, Cys63-Cys68, Cys74-Cys89, Cys83-Cys95, Cys88-Cys102, Cys106-Cys111, Cys117-Cys132, Cys126-Cys138, Cys131-Cys145, Cys149-Cys154, Cys160-Cys175, Cys169-Cys181, Cys174-Cys188, and Cys192-Cys197. 38–40 (MIC) lines the substrate pocket. 90 to 101 (SQYGYCGFGSEY) contributes to the substrate binding site. Residue 142-143 (SE) participates in substrate binding. A propeptide spanning residues 202–227 (DGMAAILANNQSVSFEGIIESVAELV) is cleaved from the precursor. Asn211 is a glycosylation site (N-linked (GlcNAc...) asparagine).

As to expression, confined to root caps, several cell layers at the periphery of the coleorhiza and radicle, and in all cell layers of the coleoptile.

Functionally, N-acetyl-D-glucosamine binding lectin. The polypeptide is Lectin (Oryza sativa subsp. japonica (Rice)).